The chain runs to 79 residues: Reactive oxygen species modulator 1 (79 aa).

A helical transmembrane segment spans residues 22–44 (GFVMGCAVGMAAGALFGTFSCLR). The tract at residues 42–60 (CLRIGMRGRELMGGIGKTM) is sufficient for antibacterial activity.

This sequence belongs to the MGR2 family.

It is found in the mitochondrion inner membrane. In terms of biological role, has antibacterial activity against a variety of bacteria including S.aureus, P.aeruginosa and M.tuberculosis. Acts by inducing bacterial membrane breakage. Induces production of reactive oxygen species (ROS) which are necessary for cell proliferation. May play a role in inducing oxidative DNA damage and replicative senescence. May play a role in the coordination of mitochondrial morphology and cell proliferation. The polypeptide is Reactive oxygen species modulator 1 (ROMO1) (Bos taurus (Bovine)).